The sequence spans 437 residues: Membrane protein NfeD1b (437 aa).

The next 5 helical transmembrane spans lie at 2 to 22 (LQIK…LLGV), 231 to 251 (WLTN…GLTV), 253 to 273 (LFSP…LLFF), 288 to 308 (LLFI…GGII), and 316 to 336 (IIAS…SLLI).

It belongs to the NfeD family.

The protein localises to the cell membrane. The protein is Membrane protein NfeD1b of Bacillus subtilis (strain 168).